We begin with the raw amino-acid sequence, 73 residues long: Protein DSS1 HOMOLOG ON CHROMOSOME V (73 aa).

It belongs to the DSS1/SEM1 family. In terms of assembly, part of the 26S proteasome. Interacts with BRCA2B. Interacts with EER5. Interacts with UCH1 and UCH2.

In terms of biological role, subunit of the 26S proteasome which plays a role in ubiquitin-dependent proteolysis. Also associates with the TREX-2 complex that is required for transcription-coupled mRNA export. The chain is Protein DSS1 HOMOLOG ON CHROMOSOME V from Arabidopsis thaliana (Mouse-ear cress).